The chain runs to 183 residues: Ribosome-recycling factor (183 aa).

The protein belongs to the RRF family.

It localises to the cytoplasm. Functionally, responsible for the release of ribosomes from messenger RNA at the termination of protein biosynthesis. May increase the efficiency of translation by recycling ribosomes from one round of translation to another. This is Ribosome-recycling factor from Ureaplasma urealyticum serovar 10 (strain ATCC 33699 / Western).